Reading from the N-terminus, the 653-residue chain is Transmembrane and coiled-coil domains protein 1 (653 aa).

Methionine 1 bears the N-acetylmethionine mark. Disordered regions lie at residues methionine 1–serine 35, histidine 58–glutamate 78, proline 112–serine 165, and threonine 204–proline 227. Residues methionine 1–asparagine 591 lie on the Cytoplasmic side of the membrane. A compositionally biased stretch (basic and acidic residues) spans glutamine 20–leucine 34. The segment covering serine 64 to glutamine 74 has biased composition (polar residues). A compositionally biased stretch (basic residues) spans proline 113–arginine 125. The span at proline 135–glutamate 144 shows a compositional bias: polar residues. Positions arginine 153–serine 165 are enriched in low complexity. The segment covering threonine 204–threonine 218 has biased composition (polar residues). Residues glutamine 228–glycine 313 adopt a coiled-coil conformation. A phosphoserine mark is found at serine 382 and serine 414. The tract at residues proline 415–threonine 437 is disordered. Residues serine 424–threonine 437 are compositionally biased toward polar residues. Positions glycine 458–glycine 576 form a coiled coil. Helical transmembrane passes span isoleucine 592–valine 612 and leucine 625–valine 645. The Cytoplasmic portion of the chain corresponds to glutamate 646–arginine 653.

Belongs to the TEX28 family. In terms of assembly, may form homodimers and heterodimers with TMCC2 or TMCC3 via the coiled-coil domains. Interacts with ribosomal proteins RPL4 and RPS6.

It localises to the endoplasmic reticulum membrane. Functionally, endoplasmic reticulum membrane protein that promotes endoplasmic reticulum-associated endosome fission. Localizes to contact sites between the endoplasmic reticulum and endosomes and acts by promoting recruitment of the endoplasmic reticulum to endosome tubules for fission. Endosome membrane fission of early and late endosomes is essential to separate regions destined for lysosomal degradation from carriers to be recycled to the plasma membrane. The protein is Transmembrane and coiled-coil domains protein 1 of Homo sapiens (Human).